A 122-amino-acid polypeptide reads, in one-letter code: Small ribosomal subunit protein bS6 (122 aa).

The disordered stretch occupies residues 97 to 122 (TAPSPMMKAVQKEDAAKSHRAEAPAA). Over residues 106–122 (VQKEDAAKSHRAEAPAA) the composition is skewed to basic and acidic residues.

It belongs to the bacterial ribosomal protein bS6 family.

Binds together with bS18 to 16S ribosomal RNA. This chain is Small ribosomal subunit protein bS6, found in Janthinobacterium sp. (strain Marseille) (Minibacterium massiliensis).